A 193-amino-acid polypeptide reads, in one-letter code: Imidazoleglycerol-phosphate dehydratase (193 aa).

It belongs to the imidazoleglycerol-phosphate dehydratase family.

Its subcellular location is the cytoplasm. The enzyme catalyses D-erythro-1-(imidazol-4-yl)glycerol 3-phosphate = 3-(imidazol-4-yl)-2-oxopropyl phosphate + H2O. Its pathway is amino-acid biosynthesis; L-histidine biosynthesis; L-histidine from 5-phospho-alpha-D-ribose 1-diphosphate: step 6/9. The polypeptide is Imidazoleglycerol-phosphate dehydratase (Methanoculleus marisnigri (strain ATCC 35101 / DSM 1498 / JR1)).